The primary structure comprises 685 residues: Beta-taxilin (685 aa).

Residues 1–135 (MEINHPDQLS…KEPVSNKEQK (135 aa)) form a disordered region. The segment covering 18–28 (GDSSSLNQNGP) has biased composition (polar residues). Composition is skewed to basic and acidic residues over residues 47 to 67 (GSLH…RQLE) and 80 to 90 (RGKESTSETKE). Over residues 98–113 (PDNEDVDYEETTEEID) the composition is skewed to acidic residues. Coiled-coil stretches lie at residues 138–354 (KKIL…VLKE) and 381–470 (NEVF…SEKE). Over residues 465–478 (KMSEKEDQVQRTSE) the composition is skewed to basic and acidic residues. 2 disordered regions span residues 465–497 (KMSE…EEAN) and 517–685 (EFTP…NGVD). Phosphoserine occurs at positions 477, 484, and 486. Over residues 479-495 (EEPEPSVSENEEVDAEE) the composition is skewed to acidic residues. Residues 575–591 (CEATPAPTASCTPAEAE) show a composition bias toward low complexity. Polar residues predominate over residues 612–627 (ANTSGQAPLSPAQGSL).

The protein belongs to the taxilin family. As to quaternary structure, binds to the C-terminal coiled coil region of syntaxin family members STX1A, STX3A and STX4A. Has a preference for STX1A. Specifically expressed in skeletal muscle.

Promotes motor nerve regeneration. May be involved in intracellular vesicle traffic. The polypeptide is Beta-taxilin (Txlnb) (Mus musculus (Mouse)).